Here is a 98-residue protein sequence, read N- to C-terminus: Large ribosomal subunit protein uL23 (98 aa).

Belongs to the universal ribosomal protein uL23 family. In terms of assembly, part of the 50S ribosomal subunit. Contacts protein L29, and trigger factor when it is bound to the ribosome.

Functionally, one of the early assembly proteins it binds 23S rRNA. One of the proteins that surrounds the polypeptide exit tunnel on the outside of the ribosome. Forms the main docking site for trigger factor binding to the ribosome. This chain is Large ribosomal subunit protein uL23, found in Rickettsia rickettsii (strain Iowa).